Here is a 755-residue protein sequence, read N- to C-terminus: Catalase-peroxidase (755 aa).

Positions 93-241 form a cross-link, tryptophyl-tyrosyl-methioninium (Trp-Tyr) (with M-267); it reads WHSAGTYRVF…LAAAHMGLIY (149 aa). Residue histidine 94 is the Proton acceptor of the active site. The segment at residues 241-267 is a cross-link (tryptophyl-tyrosyl-methioninium (Tyr-Met) (with W-93)); it reads YVNPEGPDGNPDPVAAARDIRVTFGRM. A heme b-binding site is contributed by histidine 282.

Belongs to the peroxidase family. Peroxidase/catalase subfamily. In terms of assembly, homodimer or homotetramer. The cofactor is heme b. Formation of the three residue Trp-Tyr-Met cross-link is important for the catalase, but not the peroxidase activity of the enzyme.

The protein resides in the cytoplasm. It catalyses the reaction H2O2 + AH2 = A + 2 H2O. The catalysed reaction is 2 H2O2 = O2 + 2 H2O. Functionally, bifunctional enzyme with both catalase and broad-spectrum peroxidase activity. In Podospora anserina (strain S / ATCC MYA-4624 / DSM 980 / FGSC 10383) (Pleurage anserina), this protein is Catalase-peroxidase.